A 472-amino-acid chain; its full sequence is 7-dimethylallyltryptophan synthase hasE (472 aa).

Residue glutamate 138 coordinates L-tryptophan. Dimethylallyl diphosphate is bound by residues arginine 154, lysine 239, tyrosine 241, lysine 313, tyrosine 315, tyrosine 393, tyrosine 460, and tyrosine 464.

This sequence belongs to the tryptophan dimethylallyltransferase family. Homodimer.

The enzyme catalyses L-tryptophan + dimethylallyl diphosphate = 7-(3-methylbut-2-enyl)-L-tryptophan + diphosphate. The catalysed reaction is an N-terminal L-tryptophanyl-L-alpha-aminoacyl-[peptide] + H2O = an N-terminal L-alpha-aminoacyl-[peptide] + L-tryptophan. It functions in the pathway secondary metabolite biosynthesis. Its function is as follows. 7-dimethylallyltryptophan synthase; part of the gene cluster that mediates the biosynthesis of hexadehydro-astechrome (HAS), a tryptophan-derived iron(III)-complex that acts as a virulence factor in infected mice. Catalyzes the prenylation of L-tryptophan at the C-7 position of the indole moiety. The enzyme is specific for dimethylallyl diphosphate (DMAPP) as prenyl donor. Also accepts D-tryptophan, typtophan-derivatives with modifications at the side chain or the indole ring, and linear and cyclic dipeptides such as H-L-Trp-L-Gly-OH or cyclo-L-Trp-L-Gly as substrates, however with lower efficiency. Also has tryptophan aminopeptidase activity towards linear peptides with a tryptophanyl moiety at the N-terminus. Dipeptides are better substrates than peptides with 3 or more amino acids. Enzymatic rate constants however are much higher for the prenyltransferase activity than for the aminopeptidase activity. Within the hexadehydro-astechrome biosyntetic pathway, hasE catalyzes the prenylation of the hasD-tethered tryptophan or the resulting tethered Trp-Ala dipeptid. The HAS biosynthesis begins with the synthesis of a tethered Trp-Ala dipeptide by the NRPS hasD. The 7-dimethylallyltryptophan synthase hasE then catalyzes the prenylation of the hasD-tethered tryptophan or the resulting tethered Trp-Ala dipeptide at the C-7 position of the indole moiety. HAS biosynthesis continues via tethered intermediates with the succesive actions of the cytochrome P450 monooxygenase hasH, the O-methyltransferase hasC, and the FAD-linked oxidoreductase hasG. The resulting O-methylated diketopiperazine is then released from hasD. Finally, three O-methylated diketopiperazine molecules assemble in a trimeric complex with Fe(III) to produce hexadehydro-astechrome. The sequence is that of 7-dimethylallyltryptophan synthase hasE from Aspergillus fumigatus (strain CBS 144.89 / FGSC A1163 / CEA10) (Neosartorya fumigata).